The sequence spans 264 residues: MTAVTECFRSLRSQGNCALIPFITAGDPDLSTTAQALRILDRAGADLIELGVPYSDPLADGPVIQSAATRALNRGVKLEDVLEIVKNAQGEVKAPIILFTYYNPIYHRGIDVFLDQIKAAGVSGLVVPDLPLEEAESLLQPAAAKGIEVILLVAPTSPPERIQAIALQSQGFIYLVSVTGVTGMRKQVATRVEELLDSIRSVTDKPVGVGFGISEPTQALQVKNWGADAVIVGSAMVKRLADNSPSDGLKSLEEFCRSLKQAIQ.

Residues E49 and D60 each act as proton acceptor in the active site.

Belongs to the TrpA family. Tetramer of two alpha and two beta chains.

The catalysed reaction is (1S,2R)-1-C-(indol-3-yl)glycerol 3-phosphate + L-serine = D-glyceraldehyde 3-phosphate + L-tryptophan + H2O. It functions in the pathway amino-acid biosynthesis; L-tryptophan biosynthesis; L-tryptophan from chorismate: step 5/5. The alpha subunit is responsible for the aldol cleavage of indoleglycerol phosphate to indole and glyceraldehyde 3-phosphate. The sequence is that of Tryptophan synthase alpha chain from Microcystis aeruginosa (strain NIES-843 / IAM M-2473).